A 273-amino-acid chain; its full sequence is Outer surface protein A (273 aa).

A signal peptide spans 1–16; the sequence is MKKYLLGIGLILALIA. Cys17 carries N-palmitoyl cysteine lipidation. A lipid anchor (S-diacylglycerol cysteine) is attached at Cys17.

This sequence belongs to the OspA lipoprotein family.

It localises to the cell outer membrane. Its subcellular location is the cell surface. In Borreliella burgdorferi (Lyme disease spirochete), this protein is Outer surface protein A.